A 547-amino-acid chain; its full sequence is Pyochelin synthase PchD (547 aa).

The protein belongs to the ATP-dependent AMP-binding enzyme family.

The enzyme catalyses salicylate + holo-[ACP] + ATP = salicyl-[ACP] + AMP + diphosphate. It participates in siderophore biosynthesis. Its pathway is antifungal biosynthesis. In terms of biological role, involved in the biosynthesis of the siderophore pyochelin. Specifically adenylates salicylate and loads it onto the holo form of PchE via a thioester linkage to the phosphopanthetheine moiety. Is also involved in the synthesis of the antifungal antibiotic dihydroaeruginoic acid (Dha or hydroxyphenyl-thiazolinyl-carboxylate), a precursor of pyochelin. The sequence is that of Pyochelin synthase PchD from Pseudomonas aeruginosa (strain UCBPP-PA14).